A 458-amino-acid polypeptide reads, in one-letter code: IASVVFKAGVKDYRLTYYTPEYETKDTDILAAFRVTPQPGVPAEEAGAAVAAESSTGTWTTVWTDGLTNLDRYKGRCYHIEAXVGEENQYIAYVAYPLDLFEEGSVTNMFTSIVGNVFGFKALRALRLEDLRIPTAYSKTFQGPPHGIQVERDKLNKYGRPLLGCTIKPKLGLSAKNYGRAVYECLRGGLDFTKDDENVNSQPFMRWRDRFVFCAEAIYKAQAETGEIKGHYLNATAGTCEEMMKRAAFARELGVPIVMHDYLTGGFTANTTLAHYCRDNGLLLHIHRAMHAVIDRQKNHGMHFRVLAKALRMSGGDHIHAGTVVGKLEGEREMTLGFVDLLRDDYIEKDRSRGIFFTQDWVSMPGVLPVASGGIHVWHMPALTEIFGDDSVLQFGGGTLGHPWGNAPGAVANRVALEACVQARNEGRDLAREGNEIIREACNWSPGLAAACEVWKEI.

K7 carries the N6,N6,N6-trimethyllysine modification. Positions 116 and 166 each coordinate substrate. K168 serves as the catalytic Proton acceptor. K170 is a binding site for substrate. Mg(2+)-binding residues include K194, D196, and E197. An N6-carboxylysine modification is found at K194. Catalysis depends on H287, which acts as the Proton acceptor. Substrate contacts are provided by R288, H320, and S372.

This sequence belongs to the RuBisCO large chain family. Type I subfamily. As to quaternary structure, heterohexadecamer of 8 large chains and 8 small chains; disulfide-linked. The disulfide link is formed within the large subunit homodimers. Mg(2+) is required as a cofactor. The disulfide bond which can form in the large chain dimeric partners within the hexadecamer appears to be associated with oxidative stress and protein turnover.

The protein localises to the plastid. It localises to the chloroplast. The catalysed reaction is 2 (2R)-3-phosphoglycerate + 2 H(+) = D-ribulose 1,5-bisphosphate + CO2 + H2O. It catalyses the reaction D-ribulose 1,5-bisphosphate + O2 = 2-phosphoglycolate + (2R)-3-phosphoglycerate + 2 H(+). RuBisCO catalyzes two reactions: the carboxylation of D-ribulose 1,5-bisphosphate, the primary event in carbon dioxide fixation, as well as the oxidative fragmentation of the pentose substrate in the photorespiration process. Both reactions occur simultaneously and in competition at the same active site. The sequence is that of Ribulose bisphosphate carboxylase large chain from Gladiolus gueinzii (Coastal gladiolus).